A 1096-amino-acid chain; its full sequence is Inactive phospholipase C-like protein 1 (1096 aa).

The interval 1–101 (MAEGAASREA…KKTVSFSSMP (101 aa)) is disordered. Ser48 is modified (phosphoserine). Positions 49–60 (GVALPGAAGVPA) are enriched in low complexity. A Phosphoserine modification is found at Ser78. Residues 83–222 (PSNQKCGGRK…NIWVSGLRYL (140 aa)) are interaction with PPP1C. Position 94 is a phosphothreonine (Thr94). A Phosphothreonine; by PKA modification is found at Thr94. Ser96 is modified (phosphoserine; by PKA). In terms of domain architecture, PH spans 114–224 (SFMQAGCELK…WVSGLRYLVS (111 aa)). Residues 399–543 (QDMTQPLSHY…LKNMIIVKGK (145 aa)) enclose the PI-PLC X-box domain. Residues 544-568 (KLPSESDLLEGEVTDEDEEAEMSRR) are interaction with GABA A beta subunit. The segment covering 550 to 563 (DLLEGEVTDEDEEA) has biased composition (acidic residues). The disordered stretch occupies residues 550–569 (DLLEGEVTDEDEEAEMSRRM). The residue at position 557 (Thr557) is a Phosphothreonine. Position 570 is a phosphoserine (Ser570). The PI-PLC Y-box domain maps to 586 to 702 (LSDLVSICKS…GYVLRPSIMR (117 aa)). Residues 702-831 (RDEVSYFSAN…PGYRHVPLRS (130 aa)) form the C2 domain. Residues 1040-1060 (DLLKNAKNEAVENIKQIQLAC) are a coiled coil. Residues 1067 to 1096 (KGPGGGSEAKGKRSLEAIEEKESSEENGKL) form a disordered region. Positions 1075–1096 (AKGKRSLEAIEEKESSEENGKL) are enriched in basic and acidic residues. Ser1080 is subject to Phosphoserine.

In terms of assembly, interacts with PPP2CA, Ins(1,4,5)P3, Ins(1,4,5,6)P4 GABARAP, GABA receptor beta subunits, GABA receptor gamma-2 subunits and PPP1C. May form a ternary complex with GABA receptor beta subunit and GABARAP. The formation of a ternary complex with GABA receptor beta subunit and GABARAP could be the key step for facilitating the association of GABARAP with the GABA receptor gamma-2 subunit and to allow it to be transported at the right destination. Phosphorylated by the catalytic subunit of PKA. Phosphorylation of Thr-94 resulted in dissociation of PPP1C from PRIP1.

It is found in the cytoplasm. Involved in an inositol phospholipid-based intracellular signaling cascade. Shows no PLC activity to phosphatidylinositol 4,5-bisphosphate and phosphatidylinositol. Component in the phospho-dependent endocytosis process of GABA A receptor. Acts as an inhibitor of PPP1C. Involved in the assembly and/or the trafficking of gamma-2 subunit-containing GABA A receptors. This is Inactive phospholipase C-like protein 1 (Plcl1) from Mus musculus (Mouse).